The sequence spans 250 residues: NADH-quinone oxidoreductase subunit C (250 aa).

Belongs to the complex I 30 kDa subunit family. As to quaternary structure, NDH-1 is composed of 14 different subunits. Subunits NuoB, C, D, E, F, and G constitute the peripheral sector of the complex.

The protein resides in the cell inner membrane. The catalysed reaction is a quinone + NADH + 5 H(+)(in) = a quinol + NAD(+) + 4 H(+)(out). Functionally, NDH-1 shuttles electrons from NADH, via FMN and iron-sulfur (Fe-S) centers, to quinones in the respiratory chain. The immediate electron acceptor for the enzyme in this species is believed to be ubiquinone. Couples the redox reaction to proton translocation (for every two electrons transferred, four hydrogen ions are translocated across the cytoplasmic membrane), and thus conserves the redox energy in a proton gradient. This chain is NADH-quinone oxidoreductase subunit C, found in Xanthomonas campestris pv. campestris (strain 8004).